A 304-amino-acid polypeptide reads, in one-letter code: Dermonecrotic toxin LiSicTox-betaIA1i (304 aa).

An N-terminal signal peptide occupies residues 1 to 21 (MLLPAVISFIVYAVFLQEANG). The propeptide occupies 22-26 (HAAER). H38 is a catalytic residue. Mg(2+)-binding residues include E58 and D60. The active-site Nucleophile is H74. Disulfide bonds link C78–C84 and C80–C223. Residue D118 participates in Mg(2+) binding.

Belongs to the arthropod phospholipase D family. Class II subfamily. Class IIb sub-subfamily. Requires Mg(2+) as cofactor. As to expression, expressed by the venom gland.

The protein localises to the secreted. The catalysed reaction is an N-(acyl)-sphingosylphosphocholine = an N-(acyl)-sphingosyl-1,3-cyclic phosphate + choline. The enzyme catalyses an N-(acyl)-sphingosylphosphoethanolamine = an N-(acyl)-sphingosyl-1,3-cyclic phosphate + ethanolamine. It carries out the reaction a 1-acyl-sn-glycero-3-phosphocholine = a 1-acyl-sn-glycero-2,3-cyclic phosphate + choline. It catalyses the reaction a 1-acyl-sn-glycero-3-phosphoethanolamine = a 1-acyl-sn-glycero-2,3-cyclic phosphate + ethanolamine. In terms of biological role, dermonecrotic toxins cleave the phosphodiester linkage between the phosphate and headgroup of certain phospholipids (sphingolipid and lysolipid substrates), forming an alcohol (often choline) and a cyclic phosphate. This toxin acts on sphingomyelin (SM) with low activity. It may also act on ceramide phosphoethanolamine (CPE), lysophosphatidylcholine (LPC) and lysophosphatidylethanolamine (LPE), but not on lysophosphatidylserine (LPS), and lysophosphatidylglycerol (LPG). It acts by transphosphatidylation, releasing exclusively cyclic phosphate products as second products. Induces inflammatory response but no or very weak hemolysis, dermonecrosis, vascular permeability, edema, and cytotoxicity against renal epithelial cells. Causes swelling and erythema. In vivo, is not lethal to mice when intraperitoneally injected. In Loxosceles intermedia (Brown spider), this protein is Dermonecrotic toxin LiSicTox-betaIA1i.